Here is a 248-residue protein sequence, read N- to C-terminus: Ribonuclease HII (248 aa).

Residues 29–219 (DIVCGVDEAG…VREAHLRLGT (191 aa)) enclose the RNase H type-2 domain. The a divalent metal cation site is built by Asp35, Glu36, and Asp128.

The protein belongs to the RNase HII family. Mn(2+) serves as cofactor. The cofactor is Mg(2+).

Its subcellular location is the cytoplasm. It catalyses the reaction Endonucleolytic cleavage to 5'-phosphomonoester.. Endonuclease that specifically degrades the RNA of RNA-DNA hybrids. This is Ribonuclease HII from Paraburkholderia xenovorans (strain LB400).